The chain runs to 536 residues: MSKIFKNRLEGLRALNRGVRALAKAVTSTLGPQGSHVVIKKDHSSPYVTKQGASIAKEIILPDAFENTGLKLIKEAALQMEAQVGDGSTTAIVLTDALFASGLKGVAVGLDPLEIKQGIQLAGAMLDEELAKLVVKISESEDIFHIATSSANHDAAIGKILADAIAQIGIEGVLSIKEGRGTETTLQATRHVGLNSGYLSSYFVTHPETMEVIYEDASILLCNQALSCLNQSFIHFLEQTFQTNRKPLIIIAEDFDPELLSILIVNKLKGNLPVCAIKAPGYGQQCKETLEDIAILTGATLVGDLLGISLSESSLDVLGRVEKIIVKRNTTIFSGGKGNQESLEQRIDYLRQAIVQSSSEMDTQDLEKRLARFVGGVAQIYLGSATENEYKERKIRLESALKAVKAAFKEGCLPGGGVALARAASIIKIPNELPIGVMFGCKCMLQSAEEPLRVLATNCGKDPEYVVDTVLKHADPYFGYNCINDSFENLITSGVFDPFSVTKCALKYSISISCLLLTSSFFIVDSSEKMQNPPLF.

Residues 29 to 32 (TLGP), K50, G416, and D497 each bind ATP.

The protein belongs to the chaperonin (HSP60) family. Forms a cylinder of 14 subunits composed of two heptameric rings stacked back-to-back. Interacts with the co-chaperonin GroES.

Its subcellular location is the cytoplasm. It carries out the reaction ATP + H2O + a folded polypeptide = ADP + phosphate + an unfolded polypeptide.. Functionally, together with its co-chaperonin GroES, plays an essential role in assisting protein folding. The GroEL-GroES system forms a nano-cage that allows encapsulation of the non-native substrate proteins and provides a physical environment optimized to promote and accelerate protein folding. The polypeptide is Chaperonin GroEL 2 (Chlamydia caviae (strain ATCC VR-813 / DSM 19441 / 03DC25 / GPIC) (Chlamydophila caviae)).